We begin with the raw amino-acid sequence, 427 residues long: Histidine--tRNA ligase (427 aa).

This sequence belongs to the class-II aminoacyl-tRNA synthetase family. Homodimer.

The protein localises to the cytoplasm. It carries out the reaction tRNA(His) + L-histidine + ATP = L-histidyl-tRNA(His) + AMP + diphosphate + H(+). This is Histidine--tRNA ligase from Aster yellows witches'-broom phytoplasma (strain AYWB).